We begin with the raw amino-acid sequence, 357 residues long: Holliday junction branch migration complex subunit RuvB (357 aa).

Positions 1–10 are enriched in polar residues; that stretch reads MAIQSDSLSS. Residues 1–30 form a disordered region; the sequence is MAIQSDSLSSRPDAPRLVAPAPASPNEESI. Positions 5–195 are large ATPase domain (RuvB-L); it reads SDSLSSRPDA…FGIVSRLEFY (191 aa). Residues L34, R35, G76, K79, T80, T81, 142 to 144, R185, Y195, and R232 contribute to the ATP site; that span reads EDF. T80 provides a ligand contact to Mg(2+). Residues 196–266 are small ATPAse domain (RuvB-S); it reads NTDDLAHIVT…AANQALAMLE (71 aa). Residues 269–357 form a head domain (RuvB-H) region; sequence PQGLDLMDRK…QPSSGDLFGA (89 aa). DNA is bound by residues R305, R324, and R329.

Belongs to the RuvB family. As to quaternary structure, homohexamer. Forms an RuvA(8)-RuvB(12)-Holliday junction (HJ) complex. HJ DNA is sandwiched between 2 RuvA tetramers; dsDNA enters through RuvA and exits via RuvB. An RuvB hexamer assembles on each DNA strand where it exits the tetramer. Each RuvB hexamer is contacted by two RuvA subunits (via domain III) on 2 adjacent RuvB subunits; this complex drives branch migration. In the full resolvosome a probable DNA-RuvA(4)-RuvB(12)-RuvC(2) complex forms which resolves the HJ.

Its subcellular location is the cytoplasm. The enzyme catalyses ATP + H2O = ADP + phosphate + H(+). The RuvA-RuvB-RuvC complex processes Holliday junction (HJ) DNA during genetic recombination and DNA repair, while the RuvA-RuvB complex plays an important role in the rescue of blocked DNA replication forks via replication fork reversal (RFR). RuvA specifically binds to HJ cruciform DNA, conferring on it an open structure. The RuvB hexamer acts as an ATP-dependent pump, pulling dsDNA into and through the RuvAB complex. RuvB forms 2 homohexamers on either side of HJ DNA bound by 1 or 2 RuvA tetramers; 4 subunits per hexamer contact DNA at a time. Coordinated motions by a converter formed by DNA-disengaged RuvB subunits stimulates ATP hydrolysis and nucleotide exchange. Immobilization of the converter enables RuvB to convert the ATP-contained energy into a lever motion, pulling 2 nucleotides of DNA out of the RuvA tetramer per ATP hydrolyzed, thus driving DNA branch migration. The RuvB motors rotate together with the DNA substrate, which together with the progressing nucleotide cycle form the mechanistic basis for DNA recombination by continuous HJ branch migration. Branch migration allows RuvC to scan DNA until it finds its consensus sequence, where it cleaves and resolves cruciform DNA. This Bordetella avium (strain 197N) protein is Holliday junction branch migration complex subunit RuvB.